The primary structure comprises 114 residues: DNA-directed RNA polymerases II, IV and V subunit 9A (114 aa).

Positions 7, 10, 29, 32, 76, 79, 103, and 108 each coordinate Zn(2+). The TFIIS-type zinc-finger motif lies at 72 to 113; the sequence is KAVRCSKCQHREAVFFQATARGEEGMTLFFVCCNPNCGHRWR.

It belongs to the archaeal RpoM/eukaryotic RPA12/RPB9/RPC11 RNA polymerase family. Component of the RNA polymerase II, IV and V complexes. Interacts with NRPD1.

It is found in the nucleus. It localises to the nucleolus. In terms of biological role, DNA-dependent RNA polymerase catalyzes the transcription of DNA into RNA using the four ribonucleoside triphosphates as substrates. Component of RNA polymerase II which synthesizes mRNA precursors and many functional non-coding RNAs. Pol II is the central component of the basal RNA polymerase II transcription machinery. It is composed of mobile elements that move relative to each other. Component of RNA polymerases IV and V which mediate short-interfering RNAs (siRNA) accumulation and subsequent RNA-directed DNA methylation-dependent (RdDM) transcriptional gene silencing (TGS) of endogenous repeated sequences, including transposable elements. Required for RNA silencing. This chain is DNA-directed RNA polymerases II, IV and V subunit 9A (NRPB9A), found in Arabidopsis thaliana (Mouse-ear cress).